We begin with the raw amino-acid sequence, 391 residues long: MSIVRMTDLDLSGKRVLIRQDLNVPIDNGQITSEQRITASVPTIKLALEKGAAVMVTSHLGRPKEGSWTEEDSLAPVATRLAALLGVDVPLVRDWVDGVKVAPGQVVLLENCRMNVGEGKDDQTLARKYAALCDVFVMDAFGTAHRAQASTHGVIRFAPVAAGGPLLMAELDALAKALDNPAKPLLAIVAGSKVSTKLELLSNLVDKVDQLIVGGGIANTFIAAAGHHVGKSLNEPDLIPTANQIVADAKTRGAEIPLPTDVVVAKQFLPDAEASVKALDAVDADDLILDIGPQTAQRYAELIASAGTVVWNGPVGVFEFESFSHGTETLARAIASSKAFSIAGGGDTLAAVDKYDIAKDVTYISTGGGAFLEFLEGKTLPAVAALQARGQ.

Substrate is bound by residues 21-23, Arg36, 59-62, Arg113, and Arg146; these read DLN and HLGR. Residues Lys197, Glu319, and 345–348 each bind ATP; that span reads GGDT.

Belongs to the phosphoglycerate kinase family. In terms of assembly, monomer.

The protein localises to the cytoplasm. The enzyme catalyses (2R)-3-phosphoglycerate + ATP = (2R)-3-phospho-glyceroyl phosphate + ADP. Its pathway is carbohydrate degradation; glycolysis; pyruvate from D-glyceraldehyde 3-phosphate: step 2/5. The polypeptide is Phosphoglycerate kinase (Xanthomonas oryzae pv. oryzae (strain PXO99A)).